The following is a 300-amino-acid chain: Ribosomal RNA small subunit methyltransferase H (300 aa).

S-adenosyl-L-methionine is bound by residues 43 to 45, Asp-60, Asp-105, and Gln-112; that span reads AGH.

This sequence belongs to the methyltransferase superfamily. RsmH family.

It is found in the cytoplasm. The enzyme catalyses cytidine(1402) in 16S rRNA + S-adenosyl-L-methionine = N(4)-methylcytidine(1402) in 16S rRNA + S-adenosyl-L-homocysteine + H(+). Specifically methylates the N4 position of cytidine in position 1402 (C1402) of 16S rRNA. This chain is Ribosomal RNA small subunit methyltransferase H, found in Deinococcus deserti (strain DSM 17065 / CIP 109153 / LMG 22923 / VCD115).